We begin with the raw amino-acid sequence, 116 residues long: Large ribosomal subunit protein bL20 (116 aa).

It belongs to the bacterial ribosomal protein bL20 family.

Its function is as follows. Binds directly to 23S ribosomal RNA and is necessary for the in vitro assembly process of the 50S ribosomal subunit. It is not involved in the protein synthesizing functions of that subunit. This chain is Large ribosomal subunit protein bL20, found in Helicobacter pylori (strain P12).